The chain runs to 514 residues: Na(+)/H(+) antiporter NhaB (514 aa).

Helical transmembrane passes span 23–43 (LALLVFLIVNPFIFLANPFVA), 63–83 (PLLPGGLLAIEAVIIGMTSAA), 97–117 (LLLMFMVAGIYFMKQLLLFIF), 120–140 (LLLSIRSKMVLSLAFCVAAAF), 144–164 (FLDALTVVAVVISVAVGFYGI), 202–222 (LMMHAGVGTALGGVMTMVGEP), 238–258 (FFLRMSPVTVPVLVCGLLTCM), 303–323 (AVIGVWLVTALALHLAEVGLI), 357–377 (LTVFFSIVAVIIDQHLFAPII), 391–411 (LFYLFNGLLSSISDNVFVGTI), 447–467 (ATPNGQAAFLFLLTSALAPLI), and 475–495 (VWMALPYTIVLTLIGLLCVEF).

It belongs to the NhaB Na(+)/H(+) (TC 2.A.34) antiporter family.

It localises to the cell inner membrane. The enzyme catalyses 2 Na(+)(in) + 3 H(+)(out) = 2 Na(+)(out) + 3 H(+)(in). In terms of biological role, na(+)/H(+) antiporter that extrudes sodium in exchange for external protons. This chain is Na(+)/H(+) antiporter NhaB, found in Salmonella agona (strain SL483).